The sequence spans 1974 residues: Protein Ycf2 (1974 aa).

The disordered stretch occupies residues 219–246 (SQLKGSSYQSRDHLDSISNEDSEYHNQR). 1308–1315 (GSIGTGRS) provides a ligand contact to ATP.

This sequence belongs to the Ycf2 family.

The protein resides in the plastid. It is found in the chloroplast stroma. Its function is as follows. Probable ATPase of unknown function. Its presence in a non-photosynthetic plant (Epifagus virginiana) and experiments in tobacco indicate that it has an essential function which is probably not related to photosynthesis. The chain is Protein Ycf2 from Jasminum nudiflorum (Winter jasmine).